Reading from the N-terminus, the 473-residue chain is Chromosomal replication initiator protein DnaA (473 aa).

The domain I, interacts with DnaA modulators stretch occupies residues 1-76; the sequence is MNYHSTNVNE…RTVLGRVIGP (76 aa). The tract at residues 76 to 135 is domain II; sequence PNASLQYNALVDNSSPKYPGTVTLAGCADGGQAAEQFDVNLLHRHMPNAATHSEAQDFDT. Residues 136–353 form a domain III, AAA+ region region; sequence QLNSRLNFRN…GTLVSLITNS (218 aa). ATP is bound by residues Gly181, Gly183, Lys184, and Thr185. Residues 354-473 are domain IV, binds dsDNA; the sequence is VVVGKEIDLT…VERAEQLIAN (120 aa).

It belongs to the DnaA family. As to quaternary structure, oligomerizes as a right-handed, spiral filament on DNA at oriC.

The protein localises to the cytoplasm. Its function is as follows. Plays an essential role in the initiation and regulation of chromosomal replication. ATP-DnaA binds to the origin of replication (oriC) to initiate formation of the DNA replication initiation complex once per cell cycle. Binds the DnaA box (a 9 base pair repeat at the origin) and separates the double-stranded (ds)DNA. Forms a right-handed helical filament on oriC DNA; dsDNA binds to the exterior of the filament while single-stranded (ss)DNA is stabiized in the filament's interior. The ATP-DnaA-oriC complex binds and stabilizes one strand of the AT-rich DNA unwinding element (DUE), permitting loading of DNA polymerase. After initiation quickly degrades to an ADP-DnaA complex that is not apt for DNA replication. Binds acidic phospholipids. This chain is Chromosomal replication initiator protein DnaA, found in Porphyromonas gingivalis (strain ATCC 33277 / DSM 20709 / CIP 103683 / JCM 12257 / NCTC 11834 / 2561).